We begin with the raw amino-acid sequence, 137 residues long: TSC22 domain family protein 3 (137 aa).

The interval 1–60 (MNTEMYQTPMEVAVYQLHNFSISFFSSLLGGDVVSVKLDNSASGASVVALDNKIEQAMDL) is AP1-binding. Residues Asn40 and Val73 each carry the phosphoserine modification. The leucine-zipper stretch occupies residues 76–97 (LKEQIRELLEKNSQLERENTLL). Positions 101–137 (ASPEQLEKFQSRLSPEEPAPEAPETPETPEAPGGSAV) are disordered. At Ser102 the chain carries Phosphoserine. A phosphothreonine mark is found at Thr125 and Thr128. Residues 128 to 137 (TPEAPGGSAV) are compositionally biased toward low complexity.

The protein belongs to the TSC-22/Dip/Bun family. As to quaternary structure, can form homodimers, however it is likely to function as a monomer. Interacts with NFKB1. Interacts (via N-terminus) with JUN and FOS; these interactions inhibit the binding of active AP1 to its target DNA. In terms of assembly, interacts with MYOD1. Interacts with HDAC1; this interaction affects HDAC1 activity on MYOG promoter and thus inhibits MYOD1 transcriptional activity. Interacts with MYOD1. In terms of tissue distribution, expressed in T-cells. Expression inversely correlates with T-cell activation, being higher in resting cells and lower in cells activated by TCR/CD3 triggering (at protein level). Constitutively expressed in lung, intestine, kidney and liver, most probably by resident cells from the macrophage lineage. Expressed in thymus, lymph nodes, bone marrow, spleen, lung and skeletal muscle. Expressed in spleen and skeletal muscle (at protein level). Expressed in the cortex, medulla and papilla of the kidney. As to expression, expressed in the cortex, medulla and papilla of the kidney. In terms of tissue distribution, expressed in spleen and skeletal muscle (at protein level).

Its subcellular location is the cytoplasm. It localises to the nucleus. In terms of biological role, protects T-cells from IL2 deprivation-induced apoptosis through the inhibition of FOXO3A transcriptional activity that leads to the down-regulation of the pro-apoptotic factor BCL2L11. In macrophages, plays a role in the anti-inflammatory and immunosuppressive effects of glucocorticoids and IL10. In T-cells, inhibits anti-CD3-induced NFKB1 nuclear translocation and thereby NFKB1 DNA-binding activities. In vitro, suppresses AP-1 transcription factor complex DNA-binding activities. Functionally, inhibits myogenic differentiation and mediates anti-myogenic effects of glucocorticoids by binding and regulating MYOD1 and HDAC1 transcriptional activity resulting in reduced expression of MYOG. The polypeptide is TSC22 domain family protein 3 (Mus musculus (Mouse)).